The chain runs to 263 residues: Acyl-[acyl-carrier-protein]--UDP-N-acetylglucosamine O-acyltransferase (263 aa).

This sequence belongs to the transferase hexapeptide repeat family. LpxA subfamily. As to quaternary structure, homotrimer.

The protein resides in the cytoplasm. It carries out the reaction a (3R)-hydroxyacyl-[ACP] + UDP-N-acetyl-alpha-D-glucosamine = a UDP-3-O-[(3R)-3-hydroxyacyl]-N-acetyl-alpha-D-glucosamine + holo-[ACP]. The protein operates within glycolipid biosynthesis; lipid IV(A) biosynthesis; lipid IV(A) from (3R)-3-hydroxytetradecanoyl-[acyl-carrier-protein] and UDP-N-acetyl-alpha-D-glucosamine: step 1/6. In terms of biological role, involved in the biosynthesis of lipid A, a phosphorylated glycolipid that anchors the lipopolysaccharide to the outer membrane of the cell. The chain is Acyl-[acyl-carrier-protein]--UDP-N-acetylglucosamine O-acyltransferase from Xanthomonas axonopodis pv. citri (strain 306).